A 250-amino-acid chain; its full sequence is Ubiquinone/menaquinone biosynthesis C-methyltransferase UbiE (250 aa).

S-adenosyl-L-methionine is bound by residues threonine 74, aspartate 94, 122 to 123 (DA), and serine 139.

It belongs to the class I-like SAM-binding methyltransferase superfamily. MenG/UbiE family.

It carries out the reaction a 2-demethylmenaquinol + S-adenosyl-L-methionine = a menaquinol + S-adenosyl-L-homocysteine + H(+). It catalyses the reaction a 2-methoxy-6-(all-trans-polyprenyl)benzene-1,4-diol + S-adenosyl-L-methionine = a 5-methoxy-2-methyl-3-(all-trans-polyprenyl)benzene-1,4-diol + S-adenosyl-L-homocysteine + H(+). Its pathway is quinol/quinone metabolism; menaquinone biosynthesis; menaquinol from 1,4-dihydroxy-2-naphthoate: step 2/2. It participates in cofactor biosynthesis; ubiquinone biosynthesis. In terms of biological role, methyltransferase required for the conversion of demethylmenaquinol (DMKH2) to menaquinol (MKH2) and the conversion of 2-polyprenyl-6-methoxy-1,4-benzoquinol (DDMQH2) to 2-polyprenyl-3-methyl-6-methoxy-1,4-benzoquinol (DMQH2). The chain is Ubiquinone/menaquinone biosynthesis C-methyltransferase UbiE from Cereibacter sphaeroides (strain ATCC 17029 / ATH 2.4.9) (Rhodobacter sphaeroides).